Reading from the N-terminus, the 65-residue chain is Orally active insecticidal peptide-3 (65 aa).

The first 21 residues, 1-21, serve as a signal peptide directing secretion; it reads MKTSVLFAILGLALLFCLSFG. Residues 22–29 constitute a propeptide that is removed on maturation; sequence VELEETGR. Cystine bridges form between C31–C46, C38–C51, and C45–C58. Proline amide is present on P62.

This sequence belongs to the neurotoxin 10 (Hwtx-1) family. 46 (Jztx-7/10/12) subfamily. In terms of tissue distribution, expressed by the venom gland.

The protein localises to the secreted. Functionally, probable ion channel inhibitor. Shows insecticidal activity when injected into mealworms. The polypeptide is Orally active insecticidal peptide-3 (Selenotypus plumipes (Australian featherleg tarantula)).